A 584-amino-acid polypeptide reads, in one-letter code: (+)-larreatricin hydroxylase, chloroplastic (584 aa).

A chloroplast-targeting transit peptide spans 1–32 (MASLSSQSKLLATPYSFPYHTKPSRVSLRRVS). A thylakoid-targeting transit peptide spans 33–79 (CKASNDNKDKPNDQEKTFSIDRRNMLIGLGGLYGASNVFPSNQSTLA). Intrachain disulfides connect Cys91-Cys106 and Cys105-Cys168. The Cu cation site is built by His167, His188, His197, His319, His323, and His353. A cross-link (2'-(S-cysteinyl)-histidine (Cys-His)) is located at residues 171–188 (CNGAYDQVGFPDVNIQVH). Positions 432–584 (RLRSKATTTT…KIEFVRDEED (153 aa)) are cleaved as a propeptide — removed in mature form.

The protein belongs to the tyrosinase family. The cofactor is Cu(2+).

Its subcellular location is the plastid. It is found in the chloroplast thylakoid lumen. The catalysed reaction is (+)-larreatricin + AH2 + O2 = (+)-3'-hydroxylarreatricin + A + H2O. In terms of biological role, enantio-specific polyphenol oxidase involved in aromatic ring hydroxylation. Involved in the biosynthesis of the creosote bush 8-8' linked lignans. Has a strong preference for the 3' position of (+)-larreatricin. The protein is (+)-larreatricin hydroxylase, chloroplastic of Larrea tridentata (Creosote bush).